A 673-amino-acid chain; its full sequence is MAKIAQGAMYRGSVHDFADFDANQDAEALYTAMKGFGSDKESILELITSRSNKQRQEICQSYKSLYGKDLIADLKYELTGKFERLIVNLMRPLAYCDAKEIKDAISGIGTDEKCLIEILASRTNEQIHQLVAAYKDAYERDLESDIIGDTSGHFQKMLVVLLQGTRENDDVVSEDLVQQDVQDLYEAGELKWGTDEAQFIYILGNRSKQHLRLVFDEYLKTTGKPIEASIRGELSGDFEKLMLAVVKCIRSTPEYFAERLFKAMKGLGTRDNTLIRIMVSRSELDMLDIREIFRTKYEKSLYSMIKNDTSGEYKKALLKLCGGDDDAAGQFFPEAAQVAYQMWELSAVSRVELKGTVRAANDFNPDADAKGLRKAMKGIGTDEATIIDIITQRSNVQRQQIRQTFKSHFGRDLMADLKSEISGDLARLILGLMMPPAHYDAKQLKKAMEGAGTDEKALIEILATRTNAEIRAINEAYKEDYHKSLEDALSSDTSGHFKRILISLATGNREEGGENRDQAQEDAQVAAEILEIADTPSGDKTSLETRFMTVLCTRSYPHLRRVFQEFIKKTNYDIEHVIKKEMSGDVKDAFVAIVQSVKNKPLFFADKLYKSMKGAGTDEKTLTRVMVSRSEIDLLNIRREFIEKYDKSPHQAIEGDTSGDFMKALLALCGGED.

Ala-2 carries the N-acetylalanine modification. The residue at position 13 (Ser-13) is a Phosphoserine. 8 Annexin repeats span residues 20-91 (FDAN…NLMR), 92-163 (PLAY…VLLQ), 175-247 (DLVQ…AVVK), 251-322 (STPE…KLCG), 363-434 (FNPD…GLMM), 435-506 (PPAH…SLAT), 521-595 (EDAQ…AIVQ), and 599-670 (NKPL…ALCG). At Tyr-30 the chain carries Phosphotyrosine. Lys-63, Lys-68, Lys-75, and Lys-81 each carry N6-acetyllysine. Tyr-201 is modified (phosphotyrosine). N6-acetyllysine occurs at positions 306, 370, and 418. Position 422 is a phosphoserine (Ser-422). N6-acetyllysine is present on Lys-483. Phosphoserine is present on Ser-537. The residue at position 620 (Lys-620) is an N6-acetyllysine.

Belongs to the annexin family.

It is found in the cytoplasm. Its subcellular location is the melanosome. In terms of biological role, may associate with CD21. May regulate the release of Ca(2+) from intracellular stores. The polypeptide is Annexin A6 (Anxa6) (Rattus norvegicus (Rat)).